A 151-amino-acid polypeptide reads, in one-letter code: Large ribosomal subunit protein bL9 (151 aa).

This sequence belongs to the bacterial ribosomal protein bL9 family.

Its function is as follows. Binds to the 23S rRNA. This chain is Large ribosomal subunit protein bL9, found in Chlorobium chlorochromatii (strain CaD3).